The primary structure comprises 166 residues: Sec-independent protein translocase protein TatB (166 aa).

A helical transmembrane segment spans residues 1-21; that stretch reads MIDIAFSKLAIIGVAALVFIG. The segment at 85–146 is disordered; the sequence is DSSLHSAWDE…SGQKSRVISG (62 aa).

It belongs to the TatB family. In terms of assembly, the Tat system comprises two distinct complexes: a TatABC complex, containing multiple copies of TatA, TatB and TatC subunits, and a separate TatA complex, containing only TatA subunits. Substrates initially bind to the TatABC complex, which probably triggers association of the separate TatA complex to form the active translocon.

It localises to the cell inner membrane. Functionally, part of the twin-arginine translocation (Tat) system that transports large folded proteins containing a characteristic twin-arginine motif in their signal peptide across membranes. Together with TatC, TatB is part of a receptor directly interacting with Tat signal peptides. TatB may form an oligomeric binding site that transiently accommodates folded Tat precursor proteins before their translocation. This Herminiimonas arsenicoxydans protein is Sec-independent protein translocase protein TatB.